Reading from the N-terminus, the 79-residue chain is Acyl carrier protein (79 aa).

Residues 6–79 (KEILDGLAEI…VQDVINYIQK (74 aa)) form the Carrier domain. Serine 41 is modified (O-(pantetheine 4'-phosphoryl)serine).

The protein belongs to the acyl carrier protein (ACP) family. Post-translationally, 4'-phosphopantetheine is transferred from CoA to a specific serine of apo-ACP by AcpS. This modification is essential for activity because fatty acids are bound in thioester linkage to the sulfhydryl of the prosthetic group.

The protein localises to the cytoplasm. Its pathway is lipid metabolism; fatty acid biosynthesis. Its function is as follows. Carrier of the growing fatty acid chain in fatty acid biosynthesis. The chain is Acyl carrier protein from Thermobifida fusca (strain YX).